Consider the following 276-residue polypeptide: Diaminopimelate epimerase (276 aa).

Positions 13, 46, and 66 each coordinate substrate. Cys75 serves as the catalytic Proton donor. Substrate-binding positions include 76-77 (GN), Asn159, Asn192, and 210-211 (ER). Cys219 functions as the Proton acceptor in the catalytic mechanism. 220–221 (GT) is a substrate binding site.

This sequence belongs to the diaminopimelate epimerase family. In terms of assembly, homodimer.

It is found in the cytoplasm. It catalyses the reaction (2S,6S)-2,6-diaminopimelate = meso-2,6-diaminopimelate. Its pathway is amino-acid biosynthesis; L-lysine biosynthesis via DAP pathway; DL-2,6-diaminopimelate from LL-2,6-diaminopimelate: step 1/1. Functionally, catalyzes the stereoinversion of LL-2,6-diaminopimelate (L,L-DAP) to meso-diaminopimelate (meso-DAP), a precursor of L-lysine and an essential component of the bacterial peptidoglycan. In Aeromonas hydrophila subsp. hydrophila (strain ATCC 7966 / DSM 30187 / BCRC 13018 / CCUG 14551 / JCM 1027 / KCTC 2358 / NCIMB 9240 / NCTC 8049), this protein is Diaminopimelate epimerase.